Reading from the N-terminus, the 397-residue chain is Arginine biosynthesis bifunctional protein ArgJ (397 aa).

Positions 147, 173, 184, 270, 392, and 397 each coordinate substrate. Catalysis depends on T184, which acts as the Nucleophile.

Belongs to the ArgJ family. Heterotetramer of two alpha and two beta chains.

The protein localises to the cytoplasm. The enzyme catalyses N(2)-acetyl-L-ornithine + L-glutamate = N-acetyl-L-glutamate + L-ornithine. The catalysed reaction is L-glutamate + acetyl-CoA = N-acetyl-L-glutamate + CoA + H(+). It functions in the pathway amino-acid biosynthesis; L-arginine biosynthesis; L-ornithine and N-acetyl-L-glutamate from L-glutamate and N(2)-acetyl-L-ornithine (cyclic): step 1/1. Its pathway is amino-acid biosynthesis; L-arginine biosynthesis; N(2)-acetyl-L-ornithine from L-glutamate: step 1/4. In terms of biological role, catalyzes two activities which are involved in the cyclic version of arginine biosynthesis: the synthesis of N-acetylglutamate from glutamate and acetyl-CoA as the acetyl donor, and of ornithine by transacetylation between N(2)-acetylornithine and glutamate. This is Arginine biosynthesis bifunctional protein ArgJ from Streptococcus thermophilus (strain ATCC BAA-250 / LMG 18311).